The primary structure comprises 69 residues: Large ribosomal subunit protein bL28 (69 aa).

It belongs to the bacterial ribosomal protein bL28 family.

This Nitratidesulfovibrio vulgaris (strain ATCC 29579 / DSM 644 / CCUG 34227 / NCIMB 8303 / VKM B-1760 / Hildenborough) (Desulfovibrio vulgaris) protein is Large ribosomal subunit protein bL28.